Consider the following 308-residue polypeptide: Protoheme IX farnesyltransferase (308 aa).

8 helical membrane passes run 31–51 (VIEL…RGTV), 53–73 (PLLI…ANTL), 102–122 (HALI…WLST), 124–144 (LLSG…YTML), 149–169 (TSQN…IGWS), 170–190 (AVTG…FFWT), 242–262 (LATG…FLVM), and 288–308 (YLAV…PTLL).

The protein belongs to the UbiA prenyltransferase family. Protoheme IX farnesyltransferase subfamily.

It is found in the cell membrane. It carries out the reaction heme b + (2E,6E)-farnesyl diphosphate + H2O = Fe(II)-heme o + diphosphate. It functions in the pathway porphyrin-containing compound metabolism; heme O biosynthesis; heme O from protoheme: step 1/1. In terms of biological role, converts heme B (protoheme IX) to heme O by substitution of the vinyl group on carbon 2 of heme B porphyrin ring with a hydroxyethyl farnesyl side group. In Mycolicibacterium smegmatis (strain ATCC 700084 / mc(2)155) (Mycobacterium smegmatis), this protein is Protoheme IX farnesyltransferase.